The following is a 218-amino-acid chain: uncharacterized protein (218 aa).

Disordered regions lie at residues Phe-30 to Pro-71, Ser-93 to Asp-120, and Met-133 to Pro-209. Positions Pro-43–Pro-71 are enriched in low complexity. Positions Gly-94–Gly-110 are enriched in gly residues. Residues Pro-138–Cys-148 show a composition bias toward pro residues. Residues Pro-156–Gly-171 show a composition bias toward gly residues. Positions Arg-191–Pro-209 are enriched in low complexity.

This is an uncharacterized protein from Homo sapiens (Human).